The primary structure comprises 537 residues: Chaperonin GroEL 2 (537 aa).

ATP contacts are provided by residues threonine 29–proline 32, aspartate 86–threonine 90, glycine 413, asparagine 477–alanine 479, and aspartate 493.

Belongs to the chaperonin (HSP60) family. Forms a cylinder of 14 subunits composed of two heptameric rings stacked back-to-back. Interacts with the co-chaperonin GroES.

It localises to the cytoplasm. It carries out the reaction ATP + H2O + a folded polypeptide = ADP + phosphate + an unfolded polypeptide.. Its function is as follows. Together with its co-chaperonin GroES, plays an essential role in assisting protein folding. The GroEL-GroES system forms a nano-cage that allows encapsulation of the non-native substrate proteins and provides a physical environment optimized to promote and accelerate protein folding. This is Chaperonin GroEL 2 from Thermobifida fusca (strain YX).